The sequence spans 148 residues: Putative nickel-responsive regulator (148 aa).

Ni(2+)-binding residues include His88, His99, His101, and Cys107.

The protein belongs to the transcriptional regulatory CopG/NikR family. It depends on Ni(2+) as a cofactor.

Its function is as follows. Transcriptional regulator. This Helicobacter acinonychis (strain Sheeba) protein is Putative nickel-responsive regulator.